A 242-amino-acid chain; its full sequence is DNA repair protein RecO (242 aa).

This sequence belongs to the RecO family. In terms of assembly, monomer.

Involved in DNA repair and RecF pathway recombination. In Shigella dysenteriae serotype 1 (strain Sd197), this protein is DNA repair protein RecO.